Reading from the N-terminus, the 358-residue chain is G-protein coupled receptor 20 (358 aa).

At 1 to 48 (MPSVSPAGPSAGAVPNATAVTTVRTNASGLEVPLFHLFARLDEELHGT) the chain is on the extracellular side. N-linked (GlcNAc...) asparagine glycosylation is found at N16 and N26. A helical transmembrane segment spans residues 49-69 (FPGLWLALMAVHGAIFLAGLV). At 70 to 86 (LNGLALYVFCCRTRAKT) the chain is on the cytoplasmic side. A helical membrane pass occupies residues 87–107 (PSVIYTINLVVTDLLVGLSLP). The Extracellular portion of the chain corresponds to 108-125 (TRFAVYYGARGCLRCAFP). Residues 126–146 (HVLGYFLNMHCSILFLTCICV) traverse the membrane as a helical segment. The Cytoplasmic segment spans residues 147 to 168 (DRYLAIVRPEGSRRCRQPACAR). Residues 169 to 189 (AVCAFVWLAAGAVTLSVLGVT) traverse the membrane as a helical segment. The Extracellular segment spans residues 190-196 (GSRPCCR). The helical transmembrane segment at 197–217 (VFALTVLEFLLPLLVISVFTG) threads the bilayer. Residues 218–238 (RIMCALSRPGLLHQGRQRRVR) are Cytoplasmic-facing. A helical membrane pass occupies residues 239–259 (AMQLLLTVLIIFLVCFTPFHA). Topologically, residues 260 to 275 (RQVAVALWPDMPHHTS) are extracellular. A helical transmembrane segment spans residues 276 to 296 (LVVYHVAVTLSSLNSCMDPIV). Over 297–358 (YCFVTSGFQA…TQALANGPEA (62 aa)) the chain is Cytoplasmic. The interval 315 to 339 (HGEREPSSGDVVSMHRSSKGSGRHH) is disordered. Positions 330–339 (RSSKGSGRHH) are enriched in basic residues.

Belongs to the G-protein coupled receptor 1 family. As to expression, ubiquitous with highest levels in intestinal tissues. In the brain detected in thalamus, putamen, and caudate, but not in frontal cortex, pons and hypothalamus.

It is found in the cell membrane. Its function is as follows. Orphan receptor with constitutive G(i) signaling activity that activate cyclic AMP. This Homo sapiens (Human) protein is G-protein coupled receptor 20 (GPR20).